The chain runs to 283 residues: Lolitrem B biosynthesis cluster protein S (283 aa).

The signal sequence occupies residues 1-27 (MSRSDWIFISLQGFFCLAGVIWKSREG). The next 5 helical transmembrane spans lie at 73 to 93 (WFWL…LIIL), 112 to 132 (LGYL…SLWI), 157 to 177 (IFWC…VATL), 219 to 239 (MTGT…ALEA), and 250 to 270 (VRMF…DVLL).

The protein belongs to the ltmS family.

The protein resides in the membrane. In terms of biological role, part of the gene cluster that mediates the biosynthesis of lolitrems, indole-diterpene mycotoxins that are potent tremorgens in mammals, and are synthesized by clavicipitaceous fungal endophytes in association with their grass hosts. The geranylgeranyl diphosphate (GGPP) synthase ltmG is proposed to catalyze the first step in lolitrem biosynthesis. LtmG catalyzes a series of iterative condensations of isopentenyl diphosphate (IPP) with dimethylallyl diphosphate (DMAPP), geranyl diphosphate (GPP), and farnesyl diphosphate (FPP), to form GGPP. GGPP then condenses with indole-3-glycerol phosphate to form 3-geranylgeranylindole, an acyclic intermediate, to be incorporated into paxilline. Either ltmG or ltmC could be responsible for this step, as both are putative prenyl transferases. The FAD-dependent monooxygenase ltmM then catalyzes the epoxidation of the two terminal alkenes of the geranylgeranyl moiety, which is subsequently cyclized by ltmB, to paspaline. The cytochrome P450 monooxygenases ltmQ and ltmP can sequentially oxidize paspaline to terpendole E and terpendole F. Alternatively, ltmP converts paspaline to an intermediate which is oxidized by ltmQ to terpendole F. LtmF, ltmK, ltmE and ltmJ appear to be unique to the epichloe endophytes. The prenyltransferase ltmF is involved in the 27-hydroxyl-O-prenylation. The cytochrome P450 monooxygenase ltmK is required for the oxidative acetal ring formation. The multi-functional prenyltransferase ltmE is required for C20- and C21-prenylations of the indole ring of paspalanes and acts together with the cytochrome P450 monooxygenase ltmJ to yield lolitremanes by multiple oxidations and ring closures. The stereoisomer pairs of lolitriol and lolitrem N or lolitrem B and lolitrem F may be attributed to variations in the way in which ring closure can occur under the action of ltmJ. While the major product of this pathway is lolitrem B, the prenyl transferases and cytochrome P450 monooxygenases identified in this pathway have a remarkable versatility in their regio- and stereo-specificities to generate a diverse range of metabolites that are products of a metabolic grid rather than a linear pathway. This Epichloe festucae (strain Fl1) protein is Lolitrem B biosynthesis cluster protein S.